The sequence spans 134 residues: Profilin-2 (134 aa).

Residues C13 and C118 are joined by a disulfide bond. The short motif at 84 to 100 (AVIRGKKGSGGITIKKT) is the Involved in PIP2 interaction element. Position 114 is a phosphothreonine (T114).

The protein belongs to the profilin family. As to quaternary structure, occurs in many kinds of cells as a complex with monomeric actin in a 1:1 ratio. Post-translationally, phosphorylated by MAP kinases.

It localises to the cytoplasm. It is found in the cytoskeleton. Binds to actin and affects the structure of the cytoskeleton. At high concentrations, profilin prevents the polymerization of actin, whereas it enhances it at low concentrations. This is Profilin-2 from Olea europaea (Common olive).